A 448-amino-acid chain; its full sequence is ATP-dependent protease ATPase subunit HslU (448 aa).

Residues V21, 63–68 (GVGKTE), D260, E326, and R398 contribute to the ATP site.

Belongs to the ClpX chaperone family. HslU subfamily. A double ring-shaped homohexamer of HslV is capped on each side by a ring-shaped HslU homohexamer. The assembly of the HslU/HslV complex is dependent on binding of ATP.

It localises to the cytoplasm. Its function is as follows. ATPase subunit of a proteasome-like degradation complex; this subunit has chaperone activity. The binding of ATP and its subsequent hydrolysis by HslU are essential for unfolding of protein substrates subsequently hydrolyzed by HslV. HslU recognizes the N-terminal part of its protein substrates and unfolds these before they are guided to HslV for hydrolysis. The sequence is that of ATP-dependent protease ATPase subunit HslU from Sulfurihydrogenibium sp. (strain YO3AOP1).